The sequence spans 365 residues: tRNA/tmRNA (uracil-C(5))-methyltransferase (365 aa).

The S-adenosyl-L-methionine site is built by Gln-189, Tyr-217, Asn-222, Glu-238, and Asp-298. Residue Cys-323 is the Nucleophile of the active site. Glu-357 (proton acceptor) is an active-site residue.

The protein belongs to the class I-like SAM-binding methyltransferase superfamily. RNA M5U methyltransferase family. TrmA subfamily.

The enzyme catalyses uridine(54) in tRNA + S-adenosyl-L-methionine = 5-methyluridine(54) in tRNA + S-adenosyl-L-homocysteine + H(+). It carries out the reaction uridine(341) in tmRNA + S-adenosyl-L-methionine = 5-methyluridine(341) in tmRNA + S-adenosyl-L-homocysteine + H(+). Functionally, dual-specificity methyltransferase that catalyzes the formation of 5-methyluridine at position 54 (m5U54) in all tRNAs, and that of position 341 (m5U341) in tmRNA (transfer-mRNA). The sequence is that of tRNA/tmRNA (uracil-C(5))-methyltransferase from Shewanella baltica (strain OS155 / ATCC BAA-1091).